A 143-amino-acid polypeptide reads, in one-letter code: MINDIKWVQAQRKATDWRQAVEIATRPLVAYGAAQPCYVNGIIENTLNWGPYYLIAPGIALPHARPEQGANYNQVSITTLRTPVAFGNEECDPVWLLLCVSATDANAHILTIQRISQFIDSPQRLTAVGNASTDDALFALVSG.

The PTS EIIA type-2 domain maps to 1 to 143; it reads MINDIKWVQA…DDALFALVSG (143 aa). The Tele-phosphohistidine intermediate role is filled by histidine 63.

The protein resides in the cytoplasm. The phosphoenolpyruvate-dependent sugar phosphotransferase system (sugar PTS), a major carbohydrate active -transport system, catalyzes the phosphorylation of incoming sugar substrates concomitantly with their translocation across the cell membrane. The sequence is that of Putative phosphotransferase IIA component SgcA (sgcA) from Escherichia coli (strain K12).